An 86-amino-acid polypeptide reads, in one-letter code: Progonadoliberin-2 (86 aa).

The signal sequence occupies residues M1–S24. Position 25 is a pyrrolidone carboxylic acid (Q25). The residue at position 34 (G34) is a Glycine amide.

It belongs to the GnRH family.

The protein resides in the secreted. Stimulates the secretion of gonadotropins. The chain is Progonadoliberin-2 (gnrh2) from Oncorhynchus mykiss (Rainbow trout).